The following is a 652-amino-acid chain: DNA ligase (652 aa).

NAD(+)-binding positions include 29 to 33 (DSDYD), 78 to 79 (SL), and E107. The active-site N6-AMP-lysine intermediate is K109. Residues R130, E164, K278, and K302 each contribute to the NAD(+) site. Zn(2+)-binding residues include C395, C398, C413, and C418. The BRCT domain maps to 577–652 (NSDAALFGLT…IEDEDWLRKL (76 aa)).

Belongs to the NAD-dependent DNA ligase family. LigA subfamily. It depends on Mg(2+) as a cofactor. The cofactor is Mn(2+).

It catalyses the reaction NAD(+) + (deoxyribonucleotide)n-3'-hydroxyl + 5'-phospho-(deoxyribonucleotide)m = (deoxyribonucleotide)n+m + AMP + beta-nicotinamide D-nucleotide.. Its function is as follows. DNA ligase that catalyzes the formation of phosphodiester linkages between 5'-phosphoryl and 3'-hydroxyl groups in double-stranded DNA using NAD as a coenzyme and as the energy source for the reaction. It is essential for DNA replication and repair of damaged DNA. The sequence is that of DNA ligase from Streptococcus pyogenes serotype M18 (strain MGAS8232).